Consider the following 361-residue polypeptide: Zygote arrest protein 1 (361 aa).

Disordered regions lie at residues 68–129 and 142–252; these read GPRP…PRSW and GLSS…EQDK. The segment covering 116–128 has biased composition (low complexity); sequence PRSPARAGRPPRS. Thr-155 carries the post-translational modification Phosphothreonine. The span at 238–252 shows a compositional bias: basic and acidic residues; sequence ASRDRASPQSTEQDK. The 3CxxC-type zinc-finger motif lies at 263-346; it reads KYGYYHCKDC…RQDLCGRCKD (84 aa).

It belongs to the ZAR1 family. Interacts with YBX2. Post-translationally, phosphorylation by CDK1 does not regulate formation of MARDO (mitochondria-associated ribonucleoprotein domain) membraneless compartment. In terms of processing, ubiquitinated and degradaded by the proteasome during oocyte meiotic maturation, leading to MARDO (mitochondria-associated ribonucleoprotein domain) membraneless compartment dissolution.

It is found in the cytoplasm. The protein localises to the cytoplasmic ribonucleoprotein granule. MRNA-binding protein that mediates formation of MARDO (mitochondria-associated ribonucleoprotein domain), a membraneless compartment that stores maternal mRNAs in oocytes. MARDO assembly around mitochondria is directed by an increase in mitochondrial membrane potential during oocyte growth. Promotes formation of MARDO phase-separated membraneless compartment by undergoing liquid-liquid phase separation upon binding to maternal mRNAs. Binds to the 3'-UTR of maternal mRNAs. Maternal mRNAs stored in the MARDO are translationally repressed. Essential for female fertility and oocyte-to-embryo transition by coordinating maternal mRNA storage, translation and degradation. This chain is Zygote arrest protein 1, found in Rattus norvegicus (Rat).